Consider the following 616-residue polypeptide: Chaperone protein HscA (616 aa).

Belongs to the heat shock protein 70 family.

Functionally, chaperone involved in the maturation of iron-sulfur cluster-containing proteins. Has a low intrinsic ATPase activity which is markedly stimulated by HscB. Involved in the maturation of IscU. In Escherichia coli O45:K1 (strain S88 / ExPEC), this protein is Chaperone protein HscA.